We begin with the raw amino-acid sequence, 549 residues long: Lipase 3 (549 aa).

Residues 1–15 (MKLALALSLIASVAA) form the signal peptide. A disulfide bond links Cys-75 and Cys-112. Ser-224 functions as the Acyl-ester intermediate in the catalytic mechanism. Residues Cys-283 and Cys-292 are joined by a disulfide bond. N-linked (GlcNAc...) asparagine glycosylation is present at Asn-329. Glu-356 functions as the Charge relay system in the catalytic mechanism. A glycan (N-linked (GlcNAc...) asparagine) is linked at Asn-366. His-464 acts as the Charge relay system in catalysis.

It belongs to the type-B carboxylesterase/lipase family. Monomer and homodimer.

The catalysed reaction is a triacylglycerol + H2O = a diacylglycerol + a fatty acid + H(+). This Diutina rugosa (Yeast) protein is Lipase 3 (LIP3).